The primary structure comprises 169 residues: Disulfide bond formation protein B (169 aa).

The Cytoplasmic segment spans residues 1-13; that stretch reads MQSLISFAHSRLS. Residues 14 to 30 traverse the membrane as a helical segment; the sequence is WGILALSALALESAALY. Topologically, residues 31–48 are periplasmic; that stretch reads FQHIMKLDPCVMCIYQRV. A disulfide bridge connects residues Cys-40 and Cys-43. Residues 49-64 traverse the membrane as a helical segment; that stretch reads AVFGLLGAGLFGFMAP. Over 65-71 the chain is Cytoplasmic; sequence ANRVIRA. Residues 72-89 form a helical membrane-spanning segment; that stretch reads LGALLWGISAAWGLKLAL. The Periplasmic portion of the chain corresponds to 90–144; it reads ELVDMQNNPNPFSTCSFLPEFPSWLQLHEWLPSVFMPTGMCTDIPWEFAGVTMGE. An intrachain disulfide couples Cys-104 to Cys-130. The helical transmembrane segment at 145–163 threads the bilayer; sequence WMIVAFSVYLLAWLAFIVP. Residues 164–169 lie on the Cytoplasmic side of the membrane; sequence MLKKSA.

It belongs to the DsbB family.

The protein localises to the cell inner membrane. Required for disulfide bond formation in some periplasmic proteins. Acts by oxidizing the DsbA protein. The chain is Disulfide bond formation protein B from Shewanella amazonensis (strain ATCC BAA-1098 / SB2B).